The chain runs to 172 residues: Protein YdeJ (172 aa).

The protein belongs to the CinA family.

In terms of biological role, does not have nicotinamide-nucleotide (NMN) amidohydrolase activity. The chain is Protein YdeJ (ydeJ) from Escherichia coli (strain K12).